A 191-amino-acid chain; its full sequence is Protein HP-20 homolog (191 aa).

The first 16 residues, 1 to 16 (MADLRILVSIILMTNA), serve as a signal peptide directing secretion. The Collagen-like domain maps to 22–58 (GCTGPPGPPGHPGPPGIRGPPGIRGIPGLPGPPGTPG). A disordered region spans residues 22–61 (GCTGPPGPPGHPGPPGIRGPPGIRGIPGLPGPPGTPGPSV). Positions 26–39 (PPGPPGHPGPPGIR) are enriched in pro residues. One can recognise a C1q domain in the interval 64–191 (PCHRQSAFTV…VTIYFSGFLT (128 aa)).

It is found in the secreted. The protein is Protein HP-20 homolog of Bos taurus (Bovine).